Reading from the N-terminus, the 380-residue chain is Endonuclease III homolog 2 (380 aa).

Positions 8 to 12 match the Nuclear localization signal motif; sequence RKRKH. An interaction with MLH1 region spans residues 15–40; the sequence is VDIEEVEVRSKYFKKNERTVELVKEN. Lysine 194 is covalently cross-linked (Glycyl lysine isopeptide (Lys-Gly) (interchain with G-Cter in SUMO)). The HhH domain maps to 228–252; it reads FDSDIPYDIEGILSLPGVGPKMGYL. Lysine 248 acts as the Nucleophile; for N-glycosylase activity in catalysis. [4Fe-4S] cluster contacts are provided by cysteine 319, cysteine 326, cysteine 329, and cysteine 335. The Nuclear localization signal signature appears at 376 to 380; sequence RHKKK.

Belongs to the Nth/MutY family. As to quaternary structure, interacts with MLH1. The cofactor is [4Fe-4S] cluster. Monosumoylated.

The protein resides in the nucleus. The enzyme catalyses 2'-deoxyribonucleotide-(2'-deoxyribose 5'-phosphate)-2'-deoxyribonucleotide-DNA = a 3'-end 2'-deoxyribonucleotide-(2,3-dehydro-2,3-deoxyribose 5'-phosphate)-DNA + a 5'-end 5'-phospho-2'-deoxyribonucleoside-DNA + H(+). Bifunctional DNA N-glycosylase with associated apurinic/apyrimidinic (AP) lyase function that catalyzes the first step in base excision repair (BER), the primary repair pathway for the repair of oxidative DNA damage. The DNA N-glycosylase activity releases the damaged DNA base from DNA by cleaving the N-glycosidic bond, leaving an AP site. The AP-lyase activity cleaves the phosphodiester bond 3' to the AP site by a beta-elimination. Primarily recognizes and repairs oxidative base damage of pyrimidines, but also purine-derived lesions, alkylation damage as well as abasic sites. Can also repair the oxidation products of 8-oxoguanine. This is Endonuclease III homolog 2 (NTG2) from Saccharomyces cerevisiae (strain ATCC 204508 / S288c) (Baker's yeast).